The chain runs to 330 residues: Serine/threonine-protein phosphatase PP1-alpha catalytic subunit (330 aa).

The residue at position 2 (serine 2) is an N-acetylserine. A phosphoserine mark is found at serine 2 and serine 22. 4 residues coordinate Mn(2+): aspartate 64, histidine 66, aspartate 92, and asparagine 124. Catalysis depends on histidine 125, which acts as the Proton donor. Mn(2+) is bound by residues histidine 173 and histidine 248. Position 305 is an N6-acetyllysine (lysine 305). At tyrosine 306 the chain carries Phosphotyrosine. A disordered region spans residues 306–330 (YGQFSGLNPGGRPITPPRNSAKAKK). Threonine 320 is subject to Phosphothreonine. Residue serine 325 is modified to Phosphoserine.

Belongs to the PPP phosphatase family. PP-1 subfamily. PP1 comprises a catalytic subunit, PPP1CA, PPP1CB or PPP1CC, which is folded into its native form by inhibitor 2 and glycogen synthetase kinase 3, and then complexed to one or several targeting or regulatory subunits. PPP1R12A, PPP1R12B and PPP1R12C mediate binding to myosin. PPP1R3A (in skeletal muscle), PPP1R3B (in liver), PPP1R3C, PPP1R3D and PPP1R3F (in brain) mediate binding to glycogen. Interacts with PPP1R15A and PPP1R15B; the interactions mediate binding to EIF2S1. Part of a complex containing PPP1R15B, PP1 and NCK1/2. Interacts with PPP1R9A, PPP1R9B and PPP1R7. Interacts with YLPM1. Forms a complex with ILF2, ILF3, YLPM1, KHDRBS1, RBMX and NCOA5. Interacts with NOM1 and PPP1R8. Interacts with PPP1R16B. Interacts with RPSA only in the presence of PPP1R16B. Component of the PNUTS-PP1 phosphatase complex, composed of PPP1R10/PNUTS, TOX4, WDR82, and PPP1CA or PPP1CB or PPP1CC. Interacts with PPP1R10/PNUTS and PPP1R8. Interacts with WDR82 in the presence of PPP1R10/PNUTS. Interacts with PPP1R39. transition from mitosis into interphase. Interacts with TRIM28; the interaction dephosphorylates TRIM28 on 'Ser-824' and forms a complex at the p21 promoter site. Interacts with NEK2. Interacts with PHACTR4; which acts as an activator of PP1 activity. Interacts with FER; this promotes phosphorylation at Thr-320. Interacts with BTBD10. Interacts with KCTD20. Interacts with FOXP3. Interacts with CENPA. Interacts with ATG16L1. Found in a complex with PPP1CA, PPP1CC, SHC1 and PEAK1. Interacts with tensin TNS1. Interacts with SAXO4, PPP1R21, PPP1R26, PPP1R27, PPP1R35, PPP1R36, PPP1R37, SH3RF2, ELFN1 and ELFN2. Interacts with TPRN; the interaction results in inhibition of PPC1A phosphatase activity. Interacts with SKA1 (via C-terminus); the interaction is direct and required for the recruitment of PP1 to the kinetochore. Interacts with the KNL1 complex subunit KNL1; the interaction is direct and mutually exclusive with KNL1 binding to microtubules. Component of the SHOC2-MRAS-PP1c (SMP) complex consisting of SHOC2, GTP-bound M-Ras/MRAS and the catalytic subunit of protein phosphatase 1 (either PPP1CA, PPP1CB or PPP1CC). SHOC2 and PP1c preferably bind M-Ras/MRAS, but they also bind K-Ras/KRAS, N-Ras/NRAS and H-Ras/HRAS; these interactions are GTP-dependent and both SHOC2 and PP1c are required to form a stable complex. Interacts with SHOC2 in the absence of Ras GTPases. The cofactor is Mn(2+). Phosphorylated. Dephosphorylated at Thr-320 in the presence of ionizing radiation.

It is found in the cytoplasm. The protein resides in the nucleus. The protein localises to the nucleoplasm. It localises to the nucleolus. It carries out the reaction O-phospho-L-seryl-[protein] + H2O = L-seryl-[protein] + phosphate. The catalysed reaction is O-phospho-L-threonyl-[protein] + H2O = L-threonyl-[protein] + phosphate. Its function is as follows. Protein phosphatase that associates with over 200 regulatory proteins to form highly specific holoenzymes which dephosphorylate hundreds of biological targets. Protein phosphatase 1 (PP1) is essential for cell division, transcription elongation, and participates in the regulation of glycogen metabolism, muscle contractility and protein synthesis. Involved in regulation of ionic conductances and long-term synaptic plasticity. May play an important role in dephosphorylating substrates such as the postsynaptic density-associated Ca(2+)/calmodulin dependent protein kinase II. Catalytic component of the PNUTS-PP1 protein phosphatase complex, a protein phosphatase 1 (PP1) complex that promotes RNA polymerase II transcription pause-release, allowing transcription elongation: the PNUTS-PP1 complex mediates the release of RNA polymerase II from promoter-proximal region of genes by catalyzing dephosphorylation of proteins involved in transcription, such as AFF4, CDK9, MEPCE, INTS12, NCBP1, POLR2M/GDOWN1 and SUPT6H. The PNUTS-PP1 complex also regulates transcription termination by mediating dephosphorylation of SUPT5H in termination zones downstream of poly(A) sites, thereby promoting deceleration of RNA polymerase II transcription. PNUTS-PP1 complex is also involved in the response to replication stress by mediating dephosphorylation of POLR2A at 'Ser-5' of the CTD, promoting RNA polymerase II degradation. PNUTS-PP1 also plays a role in the control of chromatin structure and cell cycle progression during the transition from mitosis into interphase. Regulates NEK2 function in terms of kinase activity and centrosome number and splitting, both in the presence and absence of radiation-induced DNA damage. Regulator of neural tube and optic fissure closure, and enteric neural crest cell (ENCCs) migration during development. In balance with CSNK1D and CSNK1E, determines the circadian period length, through the regulation of the speed and rhythmicity of PER1 and PER2 phosphorylation. May dephosphorylate CSNK1D and CSNK1E. Dephosphorylates the 'Ser-418' residue of FOXP3 in regulatory T-cells (Treg) from patients with rheumatoid arthritis, thereby inactivating FOXP3 and rendering Treg cells functionally defective. Dephosphorylates CENPA. Dephosphorylates the 'Ser-139' residue of ATG16L1 causing dissociation of ATG12-ATG5-ATG16L1 complex, thereby inhibiting autophagy. Together with PPP1CC (PP1-gamma subunit), dephosphorylates IFIH1/MDA5 and RIG-I leading to their activation and a functional innate immune response. Core component of the SHOC2-MRAS-PP1c (SMP) holophosphatase complex that regulates the MAPK pathway activation. The SMP complex specifically dephosphorylates the inhibitory phosphorylation at 'Ser-259' of RAF1 kinase, 'Ser-365' of BRAF kinase and 'Ser-214' of ARAF kinase, stimulating their kinase activities. The SMP complex enhances the dephosphorylation activity and substrate specificity of PP1c. In Canis lupus familiaris (Dog), this protein is Serine/threonine-protein phosphatase PP1-alpha catalytic subunit (PPP1CA).